A 65-amino-acid chain; its full sequence is Small ribosomal subunit protein bS21 (65 aa).

A disordered region spans residues 45 to 65 (GRLKRSRSKRRAQRANEERNS). The span at 48-57 (KRSRSKRRAQ) shows a compositional bias: basic residues.

Belongs to the bacterial ribosomal protein bS21 family.

The chain is Small ribosomal subunit protein bS21 from Chlorobium luteolum (strain DSM 273 / BCRC 81028 / 2530) (Pelodictyon luteolum).